Here is a 548-residue protein sequence, read N- to C-terminus: Chaperonin GroEL (548 aa).

ATP is bound by residues 30 to 33 (TLGP), Lys-51, 87 to 91 (DGTTT), Gly-415, 479 to 481 (NAA), and Asp-495.

Belongs to the chaperonin (HSP60) family. Forms a cylinder of 14 subunits composed of two heptameric rings stacked back-to-back. Interacts with the co-chaperonin GroES.

The protein localises to the cytoplasm. It carries out the reaction ATP + H2O + a folded polypeptide = ADP + phosphate + an unfolded polypeptide.. Functionally, together with its co-chaperonin GroES, plays an essential role in assisting protein folding. The GroEL-GroES system forms a nano-cage that allows encapsulation of the non-native substrate proteins and provides a physical environment optimized to promote and accelerate protein folding. The polypeptide is Chaperonin GroEL (Methylibium petroleiphilum (strain ATCC BAA-1232 / LMG 22953 / PM1)).